Here is a 635-residue protein sequence, read N- to C-terminus: UvrABC system protein C (635 aa).

Residues 1–14 show a composition bias toward polar residues; that stretch reads MAQNHMSETMNDIS. A disordered region spans residues 1 to 27; that stretch reads MAQNHMSETMNDISAESPDQPEPPRTG. One can recognise a GIY-YIG domain in the interval 40 to 117; that stretch reads SSPGVYRMLD…IKQLKPKYNV (78 aa). The UVR domain occupies 227–262; sequence TKIQEELGAEMQAASEAMEYERAAALRDRIKALTQV.

This sequence belongs to the UvrC family. In terms of assembly, interacts with UvrB in an incision complex.

The protein resides in the cytoplasm. Functionally, the UvrABC repair system catalyzes the recognition and processing of DNA lesions. UvrC both incises the 5' and 3' sides of the lesion. The N-terminal half is responsible for the 3' incision and the C-terminal half is responsible for the 5' incision. This is UvrABC system protein C from Ruegeria sp. (strain TM1040) (Silicibacter sp.).